Here is a 37-residue protein sequence, read N- to C-terminus: Cytochrome b6-f complex subunit 5 (37 aa).

A helical transmembrane segment spans residues 5-25 (LPSGIVLGLIPITLAGLFVTA).

It belongs to the PetG family. In terms of assembly, the 4 large subunits of the cytochrome b6-f complex are cytochrome b6, subunit IV (17 kDa polypeptide, PetD), cytochrome f and the Rieske protein, while the 4 small subunits are PetG, PetL, PetM and PetN. The complex functions as a dimer.

It localises to the plastid. It is found in the chloroplast thylakoid membrane. Functionally, component of the cytochrome b6-f complex, which mediates electron transfer between photosystem II (PSII) and photosystem I (PSI), cyclic electron flow around PSI, and state transitions. PetG is required for either the stability or assembly of the cytochrome b6-f complex. The sequence is that of Cytochrome b6-f complex subunit 5 from Pinus thunbergii (Japanese black pine).